A 397-amino-acid chain; its full sequence is Nickel-cobalt-cadmium resistance protein NccB (397 aa).

A helical transmembrane segment spans residues 10 to 30 (PSWPMIAGVAAAAALVGFGAA). A coiled-coil region spans residues 137 to 195 (EAAAMAAERKVAQARADLARKTYERESSLFQQGVTPRQEMESARIALDVAQAEVQRAAT).

It belongs to the membrane fusion protein (MFP) (TC 8.A.1) family.

It is found in the cell inner membrane. Functionally, component of the NCC cation efflux system that confers resistance to nickel, cobalt and cadmium. The sequence is that of Nickel-cobalt-cadmium resistance protein NccB (nccB) from Alcaligenes xylosoxydans xylosoxydans (Achromobacter xylosoxidans).